Here is a 254-residue protein sequence, read N- to C-terminus: MKLPWLAADTPFPPVEQALRDPDGLLAAGADLSPERLAQAYAHGIFPWYAEGEPILWWSPDPRMVLACADFAPSHSLRKRLRALARTEHDPAARLQVRVDTAFARVLHECAAPRHGQPGTWISPAVQQAYRSWHAAGFVHSIETWIDGELAGGLYGVSLGRMFYGESMFARATDASKIALAHLVAFLRRHQVAWIDCQQQTGHLARLGARPVPRARFIEHIAHAVAQPRLPWRSGRLDSAGMLHPLPPANGVMM.

This sequence belongs to the L/F-transferase family.

It localises to the cytoplasm. It carries out the reaction N-terminal L-lysyl-[protein] + L-leucyl-tRNA(Leu) = N-terminal L-leucyl-L-lysyl-[protein] + tRNA(Leu) + H(+). The catalysed reaction is N-terminal L-arginyl-[protein] + L-leucyl-tRNA(Leu) = N-terminal L-leucyl-L-arginyl-[protein] + tRNA(Leu) + H(+). The enzyme catalyses L-phenylalanyl-tRNA(Phe) + an N-terminal L-alpha-aminoacyl-[protein] = an N-terminal L-phenylalanyl-L-alpha-aminoacyl-[protein] + tRNA(Phe). Its function is as follows. Functions in the N-end rule pathway of protein degradation where it conjugates Leu, Phe and, less efficiently, Met from aminoacyl-tRNAs to the N-termini of proteins containing an N-terminal arginine or lysine. This is Leucyl/phenylalanyl-tRNA--protein transferase from Bordetella bronchiseptica (strain ATCC BAA-588 / NCTC 13252 / RB50) (Alcaligenes bronchisepticus).